An 82-amino-acid polypeptide reads, in one-letter code: Cytochrome b559 subunit alpha (82 aa).

A helical transmembrane segment spans residues 22–36; the sequence is IIHAVTLPAIFIAGF. A heme-binding site is contributed by His-24.

Belongs to the PsbE/PsbF family. As to quaternary structure, heterodimer of an alpha subunit and a beta subunit. PSII is composed of 1 copy each of membrane proteins PsbA, PsbB, PsbC, PsbD, PsbE, PsbF, PsbH, PsbI, PsbJ, PsbK, PsbL, PsbM, PsbT, PsbX, PsbY, Psb30/Ycf12, peripheral proteins PsbO, CyanoQ (PsbQ), PsbU, PsbV and a large number of cofactors. It forms dimeric complexes. Requires heme b as cofactor.

It is found in the cellular thylakoid membrane. Functionally, this b-type cytochrome is tightly associated with the reaction center of photosystem II (PSII). PSII is a light-driven water:plastoquinone oxidoreductase that uses light energy to abstract electrons from H(2)O, generating O(2) and a proton gradient subsequently used for ATP formation. It consists of a core antenna complex that captures photons, and an electron transfer chain that converts photonic excitation into a charge separation. The sequence is that of Cytochrome b559 subunit alpha from Prochlorococcus marinus (strain SARG / CCMP1375 / SS120).